A 207-amino-acid chain; its full sequence is Large ribosomal subunit protein bL25 (207 aa).

This sequence belongs to the bacterial ribosomal protein bL25 family. CTC subfamily. In terms of assembly, part of the 50S ribosomal subunit; part of the 5S rRNA/L5/L18/L25 subcomplex. Contacts the 5S rRNA. Binds to the 5S rRNA independently of L5 and L18.

This is one of the proteins that binds to the 5S RNA in the ribosome where it forms part of the central protuberance. The sequence is that of Large ribosomal subunit protein bL25 from Orientia tsutsugamushi (strain Ikeda) (Rickettsia tsutsugamushi).